A 102-amino-acid chain; its full sequence is Large ribosomal subunit protein bL21 (102 aa).

It belongs to the bacterial ribosomal protein bL21 family. As to quaternary structure, part of the 50S ribosomal subunit. Contacts protein L20.

This protein binds to 23S rRNA in the presence of protein L20. This is Large ribosomal subunit protein bL21 from Nitratidesulfovibrio vulgaris (strain DSM 19637 / Miyazaki F) (Desulfovibrio vulgaris).